The following is a 117-amino-acid chain: Early E3 13.3 kDa protein (117 aa).

The protein is Early E3 13.3 kDa protein of Canine adenovirus serotype 1 (strain Glaxo) (CAdV-1).